Here is a 59-residue protein sequence, read N- to C-terminus: UPF0181 protein YoaH (59 aa).

The protein belongs to the UPF0181 family.

In Shigella flexneri serotype 5b (strain 8401), this protein is UPF0181 protein YoaH.